The primary structure comprises 351 residues: Photosystem II D2 protein (351 aa).

A helical transmembrane segment spans residues 39–59 (CAYLAVGGWLTGTTFVTSWYT). His-116 is a chlorophyll a binding site. The chain crosses the membrane as a helical span at residues 123 to 139 (GFCLRQFEIARLVGLRP). Residues Gln-128 and Asn-141 each contribute to the pheophytin a site. The helical transmembrane segment at 151-164 (VFVSVFLMYPLGQA) threads the bilayer. His-196 is a chlorophyll a binding site. Residues 206-226 (GALLCAIHGATVQNTLFEDGD) form a helical membrane-spanning segment. The a plastoquinone site is built by His-213 and Phe-260. Position 213 (His-213) interacts with Fe cation. A Fe cation-binding site is contributed by His-267. A helical transmembrane segment spans residues 277 to 293 (GLWTSAFGIVGLALNLR).

It belongs to the reaction center PufL/M/PsbA/D family. As to quaternary structure, PSII is composed of 1 copy each of membrane proteins PsbA, PsbB, PsbC, PsbD, PsbE, PsbF, PsbH, PsbI, PsbJ, PsbK, PsbL, PsbM, PsbT, PsbX, PsbY, PsbZ, Psb30/Ycf12, at least 3 peripheral proteins of the oxygen-evolving complex and a large number of cofactors. It forms dimeric complexes. It depends on The D1/D2 heterodimer binds P680, chlorophylls that are the primary electron donor of PSII, and subsequent electron acceptors. It shares a non-heme iron and each subunit binds pheophytin, quinone, additional chlorophylls, carotenoids and lipids. There is also a Cl(-1) ion associated with D1 and D2, which is required for oxygen evolution. The PSII complex binds additional chlorophylls, carotenoids and specific lipids. as a cofactor.

The protein localises to the plastid. Its subcellular location is the chloroplast thylakoid membrane. It catalyses the reaction 2 a plastoquinone + 4 hnu + 2 H2O = 2 a plastoquinol + O2. Functionally, photosystem II (PSII) is a light-driven water:plastoquinone oxidoreductase that uses light energy to abstract electrons from H(2)O, generating O(2) and a proton gradient subsequently used for ATP formation. It consists of a core antenna complex that captures photons, and an electron transfer chain that converts photonic excitation into a charge separation. The D1/D2 (PsbA/PsbD) reaction center heterodimer binds P680, the primary electron donor of PSII as well as several subsequent electron acceptors. D2 is needed for assembly of a stable PSII complex. In Pyropia yezoensis (Susabi-nori), this protein is Photosystem II D2 protein.